We begin with the raw amino-acid sequence, 320 residues long: Cytochrome f (320 aa).

The signal sequence occupies residues 1-35; that stretch reads MQTRNTFSWIKEQITRSISASLMIYIITRTSISNA. The heme site is built by Y36, C56, C59, and H60. The helical transmembrane segment at 286-306 threads the bilayer; sequence VQGLLFFFAAVILAQIFLVLK.

Belongs to the cytochrome f family. In terms of assembly, the 4 large subunits of the cytochrome b6-f complex are cytochrome b6, subunit IV (17 kDa polypeptide, petD), cytochrome f and the Rieske protein, while the 4 small subunits are PetG, PetL, PetM and PetN. The complex functions as a dimer. It depends on heme as a cofactor.

The protein resides in the plastid. The protein localises to the chloroplast thylakoid membrane. Functionally, component of the cytochrome b6-f complex, which mediates electron transfer between photosystem II (PSII) and photosystem I (PSI), cyclic electron flow around PSI, and state transitions. This Helianthus annuus (Common sunflower) protein is Cytochrome f.